Consider the following 622-residue polypeptide: Galactolipid galactosyltransferase SFR2, chloroplastic (622 aa).

The Stromal segment spans residues 1–3 (MEL). Residues 4–24 (FALLIKVAGLLATVTVGANVV) form a helical; Signal-anchor membrane-spanning segment. At 25 to 622 (SYSRFRRQNL…LHPALASPFD (598 aa)) the chain is on the cytoplasmic side. A beta-D-glucoside contacts are provided by residues His-222, 266-267 (NE), Tyr-377, Glu-429, Trp-467, 474-475 (EW), and Phe-483. Catalysis depends on Glu-267, which acts as the Proton donor. Glu-429 functions as the Nucleophile in the catalytic mechanism.

This sequence belongs to the glycosyl hydrolase 1 family. Expressed in hypocotyls, cotyledons, stems, leaves, pedicels, sepals, anthers and pistils. Limited expression in roots. Not detected in petals or filaments.

It is found in the plastid. Its subcellular location is the chloroplast. It localises to the chloroplast outer membrane. The catalysed reaction is 2 a 1,2-diacyl-3-O-(beta-D-galactosyl)-sn-glycerol = a 1,2-diacyl-3-O-[beta-D-galactosyl-(1-&gt;6)-beta-D-galactosyl]-sn-glycerol + a 1,2-diacyl-sn-glycerol. Its activity is regulated as follows. Induced by MgCl(2). In terms of biological role, glycosyl hydrolase family protein acting primarily as a highly specific galactosyltransferase. Synthesizes digalactosyldiacylglycerol from monogalactosyldiacylglycerol in the absence of UDP-galactose in vitro. Hydrolyzes o- and p-nitrophenyl beta-D-glucoside in vitro. Plays a role in freezing tolerance. May play a role in chloroplast protection. The protein is Galactolipid galactosyltransferase SFR2, chloroplastic of Arabidopsis thaliana (Mouse-ear cress).